The following is a 214-amino-acid chain: Redox-sensing transcriptional repressor Rex (214 aa).

The segment at residues 17–56 (LYYRIFKRFYADQVEKASSKQIADAMGIDSATVRRDFSYF) is a DNA-binding region (H-T-H motif). An NAD(+)-binding site is contributed by 91-96 (GCGNIG).

This sequence belongs to the transcriptional regulatory Rex family. As to quaternary structure, homodimer.

Its subcellular location is the cytoplasm. Functionally, modulates transcription in response to changes in cellular NADH/NAD(+) redox state. The polypeptide is Redox-sensing transcriptional repressor Rex (Streptococcus equi subsp. zooepidemicus (strain H70)).